A 1372-amino-acid chain; its full sequence is DNA-directed RNA polymerase subunit beta (1372 aa).

Belongs to the RNA polymerase beta chain family. As to quaternary structure, the RNAP catalytic core consists of 2 alpha, 1 beta, 1 beta' and 1 omega subunit. When a sigma factor is associated with the core the holoenzyme is formed, which can initiate transcription.

It catalyses the reaction RNA(n) + a ribonucleoside 5'-triphosphate = RNA(n+1) + diphosphate. Its function is as follows. DNA-dependent RNA polymerase catalyzes the transcription of DNA into RNA using the four ribonucleoside triphosphates as substrates. This Bradyrhizobium diazoefficiens (strain JCM 10833 / BCRC 13528 / IAM 13628 / NBRC 14792 / USDA 110) protein is DNA-directed RNA polymerase subunit beta.